Here is a 444-residue protein sequence, read N- to C-terminus: Methylenetetrahydrofolate--tRNA-(uracil-5-)-methyltransferase TrmFO (444 aa).

An FAD-binding site is contributed by Gly-10–Gly-15.

Belongs to the MnmG family. TrmFO subfamily. The cofactor is FAD.

The protein localises to the cytoplasm. It carries out the reaction uridine(54) in tRNA + (6R)-5,10-methylene-5,6,7,8-tetrahydrofolate + NADH + H(+) = 5-methyluridine(54) in tRNA + (6S)-5,6,7,8-tetrahydrofolate + NAD(+). The enzyme catalyses uridine(54) in tRNA + (6R)-5,10-methylene-5,6,7,8-tetrahydrofolate + NADPH + H(+) = 5-methyluridine(54) in tRNA + (6S)-5,6,7,8-tetrahydrofolate + NADP(+). Its function is as follows. Catalyzes the folate-dependent formation of 5-methyl-uridine at position 54 (M-5-U54) in all tRNAs. In Streptococcus mutans serotype c (strain ATCC 700610 / UA159), this protein is Methylenetetrahydrofolate--tRNA-(uracil-5-)-methyltransferase TrmFO.